Reading from the N-terminus, the 83-residue chain is Small ribosomal subunit protein bS16c (83 aa).

The protein belongs to the bacterial ribosomal protein bS16 family.

The protein localises to the plastid. It localises to the chloroplast. The polypeptide is Small ribosomal subunit protein bS16c (Chaetosphaeridium globosum (Charophycean green alga)).